The chain runs to 388 residues: Succinate--CoA ligase [ADP-forming] subunit beta (388 aa).

One can recognise an ATP-grasp domain in the interval 9–245 (KALLKEYGMP…KSQENERELK (237 aa)). Residues Lys46, 53–55 (GRG), Glu100, Tyr103, and Glu108 each bind ATP. Asn200 and Asp214 together coordinate Mg(2+). Substrate contacts are provided by residues Asn265 and 322-324 (GIV).

The protein belongs to the succinate/malate CoA ligase beta subunit family. As to quaternary structure, heterotetramer of two alpha and two beta subunits. Mg(2+) is required as a cofactor.

The enzyme catalyses succinate + ATP + CoA = succinyl-CoA + ADP + phosphate. It carries out the reaction GTP + succinate + CoA = succinyl-CoA + GDP + phosphate. The protein operates within carbohydrate metabolism; tricarboxylic acid cycle; succinate from succinyl-CoA (ligase route): step 1/1. Functionally, succinyl-CoA synthetase functions in the citric acid cycle (TCA), coupling the hydrolysis of succinyl-CoA to the synthesis of either ATP or GTP and thus represents the only step of substrate-level phosphorylation in the TCA. The beta subunit provides nucleotide specificity of the enzyme and binds the substrate succinate, while the binding sites for coenzyme A and phosphate are found in the alpha subunit. The chain is Succinate--CoA ligase [ADP-forming] subunit beta from Acinetobacter baumannii (strain AB307-0294).